Consider the following 365-residue polypeptide: 1-deoxy-D-xylulose 5-phosphate reductoisomerase (365 aa).

8 residues coordinate NADPH: Thr7, Gly8, Ser9, Ile10, Ala31, Lys32, Asn33, and Asn114. 1-deoxy-D-xylulose 5-phosphate is bound at residue Lys115. Position 116 (Glu116) interacts with NADPH. Asp134 lines the Mn(2+) pocket. 1-deoxy-D-xylulose 5-phosphate is bound by residues Ser135, Glu136, Ser158, and His181. Position 136 (Glu136) interacts with Mn(2+). Gly187 provides a ligand contact to NADPH. 1-deoxy-D-xylulose 5-phosphate is bound by residues Ser194, Asn199, Lys200, and Glu203. Glu203 contacts Mn(2+).

Belongs to the DXR family. Mg(2+) serves as cofactor. The cofactor is Mn(2+).

The catalysed reaction is 2-C-methyl-D-erythritol 4-phosphate + NADP(+) = 1-deoxy-D-xylulose 5-phosphate + NADPH + H(+). Its pathway is isoprenoid biosynthesis; isopentenyl diphosphate biosynthesis via DXP pathway; isopentenyl diphosphate from 1-deoxy-D-xylulose 5-phosphate: step 1/6. In terms of biological role, catalyzes the NADPH-dependent rearrangement and reduction of 1-deoxy-D-xylulose-5-phosphate (DXP) to 2-C-methyl-D-erythritol 4-phosphate (MEP). This is 1-deoxy-D-xylulose 5-phosphate reductoisomerase from Campylobacter curvus (strain 525.92).